Reading from the N-terminus, the 391-residue chain is Multidrug resistance protein MdtL (391 aa).

12 helical membrane-spanning segments follow: residues phenylalanine 4–valine 24, isoleucine 42–alanine 62, proline 69–glutamate 89, leucine 93–phenylalanine 113, leucine 131–methionine 151, serine 158–leucine 178, phenylalanine 203–valine 222, alanine 245–phenylalanine 265, threonine 269–proline 289, valine 293–methionine 313, leucine 331–isoleucine 351, and methionine 356–alanine 376.

Belongs to the major facilitator superfamily. DHA1 family. MdtL (TC 2.A.1.2.22) subfamily.

The protein localises to the cell inner membrane. In terms of biological role, confers resistance to chloramphenicol. This Escherichia coli O45:K1 (strain S88 / ExPEC) protein is Multidrug resistance protein MdtL.